The following is a 466-amino-acid chain: Phage-like element PBSX protein XkdK (466 aa).

The protein belongs to the myoviridae tail sheath protein family.

This Bacillus subtilis (strain 168) protein is Phage-like element PBSX protein XkdK (xkdK).